The chain runs to 424 residues: Mitogen-activated protein kinase 9 (424 aa).

Residues 26–321 (YQQLKPIGSG…VDEALRHPYI (296 aa)) form the Protein kinase domain. ATP is bound by residues 32–40 (IGSGAQGIV) and K55. D151 functions as the Proton acceptor in the catalytic mechanism. T183 is subject to Phosphothreonine; by MAP2K7. Positions 183–185 (TPY) match the TXY motif. Phosphotyrosine; by MAP2K4 is present on Y185. Positions 368–424 (KNGVVKDQPSDAAVSSNATPSQSSSINDISSMSTEQTLASDTDSSLDASTGPLEGCR) are disordered. Positions 388–417 (SQSSSINDISSMSTEQTLASDTDSSLDAST) are enriched in low complexity.

It belongs to the protein kinase superfamily. CMGC Ser/Thr protein kinase family. MAP kinase subfamily. In terms of assembly, interacts with MECOM. Interacts with DCLK2. Binds to at least four scaffolding proteins, MAPK8IP1/JIP-1, MAPK8IP2/JIP-2, MAPK8IP3/JIP-3/JSAP1 and SPAG9/MAPK8IP4/JIP-4. These proteins also bind other components of the JNK signaling pathway. Interacts with NFATC4. Interacts with ATF7; the interaction does not phosphorylate ATF7 but acts as a docking site for ATF7-associated partners such as JUN. Interacts with BCL10. Interacts with CTNNB1 and GSK3B. Interacts with MAPKBP1. Interacts with POU5F1; phosphorylates POU5F1 at 'Ser-355'. Found in a complex with SH3RF1, RAC2, MAP3K7/TAK1, MAP2K7/MKK7, MAPK8IP1/JIP1 and MAPK8/JNK1. Mg(2+) serves as cofactor. In terms of processing, dually phosphorylated on Thr-183 and Tyr-185 by MAP2K7 and MAP2K4, which activates the enzyme. Autophosphorylated in vitro.

The protein localises to the cytoplasm. The protein resides in the nucleus. The enzyme catalyses L-seryl-[protein] + ATP = O-phospho-L-seryl-[protein] + ADP + H(+). It carries out the reaction L-threonyl-[protein] + ATP = O-phospho-L-threonyl-[protein] + ADP + H(+). Its activity is regulated as follows. Activated by threonine and tyrosine phosphorylation by either of two dual specificity kinases, MAP2K4 and MAP2K7. MAP2K4 shows a strong preference for Tyr-185 while MAP2K7 phosphorylates Tyr-183 preferentially. Inhibited by dual specificity phosphatases, such as DUSP1. Serine/threonine-protein kinase involved in various processes such as cell proliferation, differentiation, migration, transformation and programmed cell death. Extracellular stimuli such as pro-inflammatory cytokines or physical stress stimulate the stress-activated protein kinase/c-Jun N-terminal kinase (SAP/JNK) signaling pathway. In this cascade, two dual specificity kinases MAP2K4/MKK4 and MAP2K7/MKK7 phosphorylate and activate MAPK9/JNK2. In turn, MAPK9/JNK2 phosphorylates a number of transcription factors, primarily components of AP-1 such as JUN and ATF2 and thus regulates AP-1 transcriptional activity. In response to oxidative or ribotoxic stresses, inhibits rRNA synthesis by phosphorylating and inactivating the RNA polymerase 1-specific transcription initiation factor RRN3. Promotes stressed cell apoptosis by phosphorylating key regulatory factors including TP53 and YAP1. In T-cells, MAPK8 and MAPK9 are required for polarized differentiation of T-helper cells into Th1 cells. Upon T-cell receptor (TCR) stimulation, is activated by CARMA1, BCL10, MAP2K7 and MAP3K7/TAK1 to regulate JUN protein levels. Plays an important role in the osmotic stress-induced epithelial tight-junctions disruption. When activated, promotes beta-catenin/CTNNB1 degradation and inhibits the canonical Wnt signaling pathway. Also participates in neurite growth in spiral ganglion neurons. Phosphorylates the CLOCK-BMAL1 heterodimer and plays a role in the regulation of the circadian clock. Phosphorylates POU5F1, which results in the inhibition of POU5F1's transcriptional activity and enhances its proteasomal degradation. Phosphorylates ALKBH5 in response to reactive oxygen species (ROS), promoting ALKBH5 sumoylation and inactivation. Its function is as follows. MAPK9 isoforms display different binding patterns: alpha-1 and alpha-2 preferentially bind to JUN, whereas beta-1 and beta-2 bind to ATF2. However, there is no correlation between binding and phosphorylation, which is achieved at about the same efficiency by all isoforms. JUNB is not a substrate for JNK2 alpha-2, and JUND binds only weakly to it. This is Mitogen-activated protein kinase 9 (MAPK9) from Homo sapiens (Human).